The chain runs to 588 residues: Probable basic-leucine zipper transcription factor M (588 aa).

Positions 127-157 (QVEQQQEQEQEQEQQQKQQQQQYIEKQIQEI) form a coiled coil. The span at 221-240 (QQNHIDNQSLNNSNTKTSKN) shows a compositional bias: low complexity. Residues 221–250 (QQNHIDNQSLNNSNTKTSKNQQKDNNLPKK) form a disordered region. In terms of domain architecture, bZIP spans 263–326 (NNNNIEKKRD…GSNLMRPEPE (64 aa)). The basic motif stretch occupies residues 269–289 (KKRDQTESSKNFREKKKEYVK). Positions 291 to 312 (IESKILALTLENDKLKKENDSL) are leucine-zipper.

It belongs to the bZIP family.

The protein localises to the nucleus. Its function is as follows. Probable transcriptional regulator. This is Probable basic-leucine zipper transcription factor M (bzpM) from Dictyostelium discoideum (Social amoeba).